The chain runs to 102 residues: Cytochrome c-553 (102 aa).

A signal peptide spans 1 to 23 (MKRILVVMSICAALAFGVSAAMA). Residues Cys33, Cys36, His37, and Met80 each coordinate heme c.

In terms of processing, binds 1 heme c group covalently per subunit.

It localises to the periplasm. In terms of biological role, natural electron acceptor for a formate dehydrogenase. The sequence is that of Cytochrome c-553 from Nitratidesulfovibrio vulgaris (strain DSM 19637 / Miyazaki F) (Desulfovibrio vulgaris).